An 88-amino-acid polypeptide reads, in one-letter code: Small ribosomal subunit protein uS15 (88 aa).

Belongs to the universal ribosomal protein uS15 family. Part of the 30S ribosomal subunit. Forms a bridge to the 50S subunit in the 70S ribosome, contacting the 23S rRNA.

Functionally, one of the primary rRNA binding proteins, it binds directly to 16S rRNA where it helps nucleate assembly of the platform of the 30S subunit by binding and bridging several RNA helices of the 16S rRNA. Its function is as follows. Forms an intersubunit bridge (bridge B4) with the 23S rRNA of the 50S subunit in the ribosome. The polypeptide is Small ribosomal subunit protein uS15 (Mycoplasma mobile (strain ATCC 43663 / 163K / NCTC 11711) (Mesomycoplasma mobile)).